A 436-amino-acid polypeptide reads, in one-letter code: tRNA modification GTPase MnmE (436 aa).

Positions 20, 77, and 117 each coordinate (6S)-5-formyl-5,6,7,8-tetrahydrofolate. The TrmE-type G domain occupies 214 to 360 (GLKIVIAGAP…FIKELESFCL (147 aa)). GTP-binding positions include 224–229 (NSGKSS), 243–249 (MEEAGTT), and 268–271 (DTAG). Positions 228 and 249 each coordinate Mg(2+). Residue lysine 436 participates in (6S)-5-formyl-5,6,7,8-tetrahydrofolate binding.

It belongs to the TRAFAC class TrmE-Era-EngA-EngB-Septin-like GTPase superfamily. TrmE GTPase family. Homodimer. Heterotetramer of two MnmE and two MnmG subunits. Requires K(+) as cofactor.

Its subcellular location is the cytoplasm. Functionally, exhibits a very high intrinsic GTPase hydrolysis rate. Involved in the addition of a carboxymethylaminomethyl (cmnm) group at the wobble position (U34) of certain tRNAs, forming tRNA-cmnm(5)s(2)U34. The polypeptide is tRNA modification GTPase MnmE (Bartonella quintana (strain Toulouse) (Rochalimaea quintana)).